The chain runs to 336 residues: Eukaryotic translation initiation factor 3 subunit I (336 aa).

WD repeat units follow at residues 8–47 (GHER…RLGT), 50–91 (GHLG…KVWE), 146–185 (CTES…QLEN), 190–229 (EFDH…ILKT), and 287–326 (GHFG…FDFM).

This sequence belongs to the eIF-3 subunit I family. Component of the eukaryotic translation initiation factor 3 (eIF-3) complex.

The protein localises to the cytoplasm. In terms of biological role, component of the eukaryotic translation initiation factor 3 (eIF-3) complex, which is involved in protein synthesis of a specialized repertoire of mRNAs and, together with other initiation factors, stimulates binding of mRNA and methionyl-tRNAi to the 40S ribosome. The eIF-3 complex specifically targets and initiates translation of a subset of mRNAs involved in cell proliferation. In Emericella nidulans (strain FGSC A4 / ATCC 38163 / CBS 112.46 / NRRL 194 / M139) (Aspergillus nidulans), this protein is Eukaryotic translation initiation factor 3 subunit I (tif34).